The following is a 566-amino-acid chain: Viral IRF3-like protein (566 aa).

Disordered stretches follow at residues 151-170 (PRPF…PAFC) and 176-236 (QTGA…VHTD).

This sequence belongs to the IRF family. Interacts with host SKP2. Interacts with host USP7.

In terms of biological role, plays a role in the inhibition of host immune response. Interferes with the transactivating potential of cellular IRFs IRF3 and IRF7 that play a critical role in the induction of IFNA and IFNB genes. Additionally, interferes with surface major histocompatibility complex class II (MHC-II) antigen presentation. The sequence is that of Viral IRF3-like protein (vIRF-3) from Human herpesvirus 8 type P (isolate GK18) (HHV-8).